A 1031-amino-acid polypeptide reads, in one-letter code: Error-prone DNA polymerase (1031 aa).

This sequence belongs to the DNA polymerase type-C family. DnaE2 subfamily.

Its subcellular location is the cytoplasm. The enzyme catalyses DNA(n) + a 2'-deoxyribonucleoside 5'-triphosphate = DNA(n+1) + diphosphate. Functionally, DNA polymerase involved in damage-induced mutagenesis and translesion synthesis (TLS). It is not the major replicative DNA polymerase. This is Error-prone DNA polymerase from Pseudomonas syringae pv. syringae (strain B728a).